Consider the following 106-residue polypeptide: UPF0145 protein PSEEN3024 (106 aa).

Belongs to the UPF0145 family.

This chain is UPF0145 protein PSEEN3024, found in Pseudomonas entomophila (strain L48).